Consider the following 408-residue polypeptide: Arginine biosynthesis bifunctional protein ArgJ (408 aa).

Substrate-binding residues include Thr-158, Lys-184, Thr-195, Glu-281, Asn-403, and Thr-408. Thr-195 serves as the catalytic Nucleophile.

Belongs to the ArgJ family. As to quaternary structure, heterotetramer of two alpha and two beta chains.

Its subcellular location is the cytoplasm. It catalyses the reaction N(2)-acetyl-L-ornithine + L-glutamate = N-acetyl-L-glutamate + L-ornithine. The enzyme catalyses L-glutamate + acetyl-CoA = N-acetyl-L-glutamate + CoA + H(+). It participates in amino-acid biosynthesis; L-arginine biosynthesis; L-ornithine and N-acetyl-L-glutamate from L-glutamate and N(2)-acetyl-L-ornithine (cyclic): step 1/1. Its pathway is amino-acid biosynthesis; L-arginine biosynthesis; N(2)-acetyl-L-ornithine from L-glutamate: step 1/4. Catalyzes two activities which are involved in the cyclic version of arginine biosynthesis: the synthesis of N-acetylglutamate from glutamate and acetyl-CoA as the acetyl donor, and of ornithine by transacetylation between N(2)-acetylornithine and glutamate. This Bacillus cereus (strain ATCC 14579 / DSM 31 / CCUG 7414 / JCM 2152 / NBRC 15305 / NCIMB 9373 / NCTC 2599 / NRRL B-3711) protein is Arginine biosynthesis bifunctional protein ArgJ.